The primary structure comprises 132 residues: Large ribosomal subunit protein uL14 (132 aa).

Belongs to the universal ribosomal protein uL14 family. Part of the 50S ribosomal subunit. Forms a cluster with proteins L3 and L24e, part of which may contact the 16S rRNA in 2 intersubunit bridges.

Functionally, binds to 23S rRNA. Forms part of two intersubunit bridges in the 70S ribosome. The protein is Large ribosomal subunit protein uL14 of Methanothrix thermoacetophila (strain DSM 6194 / JCM 14653 / NBRC 101360 / PT) (Methanosaeta thermophila).